The following is a 184-amino-acid chain: 1,6-anhydro-N-acetylmuramyl-L-alanine amidase AmpD (184 aa).

One can recognise an N-acetylmuramoyl-L-alanine amidase domain in the interval 30–171 (QDISLLVIHY…ISPKRKIDPG (142 aa)). His-38 is a Zn(2+) binding site. Catalysis depends on Glu-120, which acts as the Proton acceptor. The Zn(2+) site is built by His-159 and Asp-169.

It belongs to the N-acetylmuramoyl-L-alanine amidase 2 family. Zn(2+) is required as a cofactor.

It localises to the cytoplasm. It carries out the reaction Hydrolyzes the link between N-acetylmuramoyl residues and L-amino acid residues in certain cell-wall glycopeptides.. Its function is as follows. Involved in cell wall peptidoglycan recycling. Specifically cleaves the amide bond between the lactyl group of N-acetylmuramic acid and the alpha-amino group of the L-alanine in degradation products containing an anhydro N-acetylmuramyl moiety. This Haemophilus influenzae (strain ATCC 51907 / DSM 11121 / KW20 / Rd) protein is 1,6-anhydro-N-acetylmuramyl-L-alanine amidase AmpD (ampD).